Consider the following 352-residue polypeptide: tRNA uridine(34) hydroxylase (352 aa).

The Rhodanese domain maps to 146–240 (DNPDTLFVDM…YARKAREQGL (95 aa)). C200 acts as the Cysteine persulfide intermediate in catalysis. The span at 315 to 328 (ETEQRARRAGRENG) shows a compositional bias: basic and acidic residues. The disordered stretch occupies residues 315–352 (ETEQRARRAGRENGAKIFNKSRHRLQDGLNSTSLQSVE). The span at 342–352 (GLNSTSLQSVE) shows a compositional bias: polar residues.

It belongs to the TrhO family.

It carries out the reaction uridine(34) in tRNA + AH2 + O2 = 5-hydroxyuridine(34) in tRNA + A + H2O. Functionally, catalyzes oxygen-dependent 5-hydroxyuridine (ho5U) modification at position 34 in tRNAs. The chain is tRNA uridine(34) hydroxylase from Photorhabdus laumondii subsp. laumondii (strain DSM 15139 / CIP 105565 / TT01) (Photorhabdus luminescens subsp. laumondii).